The following is a 332-amino-acid chain: Ornithine carbamoyltransferase 1, catabolic (332 aa).

Carbamoyl phosphate-binding positions include 56–59 (STRT), Q83, R107, and 134–137 (HPTQ). L-ornithine contacts are provided by residues N167, D231, and 235–236 (SM). Carbamoyl phosphate is bound by residues 273–274 (CL) and R318.

Belongs to the aspartate/ornithine carbamoyltransferase superfamily. OTCase family.

Its subcellular location is the cytoplasm. The enzyme catalyses carbamoyl phosphate + L-ornithine = L-citrulline + phosphate + H(+). Its pathway is amino-acid degradation; L-arginine degradation via ADI pathway; carbamoyl phosphate from L-arginine: step 2/2. Its function is as follows. Reversibly catalyzes the transfer of the carbamoyl group from carbamoyl phosphate (CP) to the N(epsilon) atom of ornithine (ORN) to produce L-citrulline. In Staphylococcus epidermidis (strain ATCC 12228 / FDA PCI 1200), this protein is Ornithine carbamoyltransferase 1, catabolic (arcB1).